The chain runs to 530 residues: Membrane-associated transporter protein (530 aa).

At 1-45 the chain is on the cytoplasmic side; sequence MSGSNGPTDTHTYQSLAEDCPFGSVEQPKRSTGRLVMHSMAMFGR. Residues 46–66 form a helical membrane-spanning segment; it reads EFCYAVEAAYVTPVLLSVGLP. Over 67–68 the chain is Extracellular; that stretch reads KS. The helical transmembrane segment at 69-89 threads the bilayer; it reads LYSMVWLLSPILGFLLQPVVG. At 90–105 the chain is on the cytoplasmic side; sequence SASDHCRARWGRRRPY. The helical transmembrane segment at 106-126 threads the bilayer; it reads ILTLAIMMLLGMALYLNGDAV. Topologically, residues 127–138 are extracellular; that stretch reads VSALVANPRQKL. Residues 139–159 traverse the membrane as a helical segment; the sequence is IWAISITMVGVVLFDFSADFI. Residues 160–184 are Cytoplasmic-facing; it reads DGPIKAYLFDVCSHQDKEKGLHYHA. The helical transmembrane segment at 185–205 threads the bilayer; the sequence is LFTGFGGALGYILGAIDWVHL. The Extracellular segment spans residues 206 to 216; that stretch reads DLGRLLGTEFQ. Residues 217–237 form a helical membrane-spanning segment; that stretch reads VMFFFSALVLILCFITHLCSI. Topologically, residues 238-318 are cytoplasmic; the sequence is PEAPLRDAAT…ALVNMPSHYR (81 aa). A disordered region spans residues 275–299; the sequence is KNGGADTEQPVQEWKNKKPSGQSQR. Residues 319–339 form a helical membrane-spanning segment; sequence CLCVSHLIGWTAFLSNMLFFT. The Extracellular portion of the chain corresponds to 340 to 366; it reads DFMGQIVYHGDPYGAHNSTEFLIYERG. Asn356 carries an N-linked (GlcNAc...) asparagine glycan. Residues 367–387 traverse the membrane as a helical segment; it reads VEVGCWGLCINSVFSSVYSYF. The Cytoplasmic portion of the chain corresponds to 388–398; it reads QKAMVSYIGLK. Residues 399 to 419 traverse the membrane as a helical segment; it reads GLYFMGYLLFGLGTGFIGLFP. Topologically, residues 420–425 are extracellular; the sequence is NVYSTL. A helical transmembrane segment spans residues 426–446; the sequence is VLCSMFGVMSSTLYTVPFNLI. Residues 447–477 are Cytoplasmic-facing; sequence AEYHREEEKEKGQEAPGGPDNQGRGKGVDCA. Residues 478–498 form a helical membrane-spanning segment; that stretch reads ALTCMVQLAQILVGGGLGFLV. Topologically, residues 499–504 are extracellular; it reads NMAGSV. The helical transmembrane segment at 505–525 threads the bilayer; sequence VVVVITASAVSLIGCCFVALF. The Cytoplasmic portion of the chain corresponds to 526 to 530; that stretch reads VRYVD.

Belongs to the glycoside-pentoside-hexuronide (GPH) cation symporter transporter (TC 2.A.2) family. As to quaternary structure, interacts with TYRP1. Mainly expressed in eyeballs and skin melanocytes. Also detected in kidney, colon, gall bladder and pancreas.

It localises to the melanosome membrane. The catalysed reaction is sucrose(out) + H(+)(out) = sucrose(in) + H(+)(in). It carries out the reaction D-glucose(out) + H(+)(out) = D-glucose(in) + H(+)(in). Proton-associated glucose and sucrose transporter. May be able to transport also fructose. Expressed at a late melanosome maturation stage where functions as a proton/glucose exporter which increase lumenal pH by decreasing glycolysis. Regulates melanogenesis by maintaining melanosome neutralization that is initially initiated by transient OCA2 and required for a proper function of the tyrosinase TYR. The chain is Membrane-associated transporter protein (Slc45a2) from Mus musculus (Mouse).